Here is a 398-residue protein sequence, read N- to C-terminus: Dual-specificity RNA methyltransferase RlmN (398 aa).

The Proton acceptor role is filled by E119. The region spanning 125–364 (EGDRATLCVS…TIVRKTRGDD (240 aa)) is the Radical SAM core domain. A disulfide bridge links C132 with C369. [4Fe-4S] cluster-binding residues include C139, C143, and C146. Residues 193 to 194 (GE), S225, 247 to 249 (SLH), and N326 each bind S-adenosyl-L-methionine. The S-methylcysteine intermediate role is filled by C369.

It belongs to the radical SAM superfamily. RlmN family. [4Fe-4S] cluster serves as cofactor.

The protein resides in the cytoplasm. It carries out the reaction adenosine(2503) in 23S rRNA + 2 reduced [2Fe-2S]-[ferredoxin] + 2 S-adenosyl-L-methionine = 2-methyladenosine(2503) in 23S rRNA + 5'-deoxyadenosine + L-methionine + 2 oxidized [2Fe-2S]-[ferredoxin] + S-adenosyl-L-homocysteine. It catalyses the reaction adenosine(37) in tRNA + 2 reduced [2Fe-2S]-[ferredoxin] + 2 S-adenosyl-L-methionine = 2-methyladenosine(37) in tRNA + 5'-deoxyadenosine + L-methionine + 2 oxidized [2Fe-2S]-[ferredoxin] + S-adenosyl-L-homocysteine. Functionally, specifically methylates position 2 of adenine 2503 in 23S rRNA and position 2 of adenine 37 in tRNAs. m2A2503 modification seems to play a crucial role in the proofreading step occurring at the peptidyl transferase center and thus would serve to optimize ribosomal fidelity. This Yersinia enterocolitica serotype O:8 / biotype 1B (strain NCTC 13174 / 8081) protein is Dual-specificity RNA methyltransferase RlmN.